The following is a 133-amino-acid chain: Ribosome-binding factor A (133 aa).

The protein belongs to the RbfA family. As to quaternary structure, monomer. Binds 30S ribosomal subunits, but not 50S ribosomal subunits or 70S ribosomes.

Its subcellular location is the cytoplasm. Functionally, one of several proteins that assist in the late maturation steps of the functional core of the 30S ribosomal subunit. Associates with free 30S ribosomal subunits (but not with 30S subunits that are part of 70S ribosomes or polysomes). Required for efficient processing of 16S rRNA. May interact with the 5'-terminal helix region of 16S rRNA. This is Ribosome-binding factor A from Salmonella typhi.